We begin with the raw amino-acid sequence, 529 residues long: Pre-rRNA-processing protein pro-1 (529 aa).

WD repeat units lie at residues 136–175 (AHYQ…SADR) and 287–326 (GHSD…CLKV). Positions 416-518 (ARNEAAKAEK…LKEINKQMYE (103 aa)) form a coiled coil. The segment at 436-470 (TLGDDEDDAPEVGNQRRKSGKKNKKNRKNQKKNDF) is disordered. Residues 450-465 (QRRKSGKKNKKNRKNQ) are compositionally biased toward basic residues.

Belongs to the WD repeat IPI3/WDR18 family. Component of the PELP1 complex, composed of at least PELP1, TEX10 and WDR18. The complex interacts with pre-60S ribosome particles.

The protein localises to the nucleus. The protein resides in the nucleolus. It is found in the nucleoplasm. In terms of biological role, component of the PELP1 complex involved in the nucleolar steps of 28S rRNA maturation and the subsequent nucleoplasmic transit of the pre-60S ribosomal subunit. Required for processing ITS2 sequences from rRNA intermediates during 26S rRNA maturation. Required in the soma to promote normal proliferation and prevent germline tumor formation. This is Pre-rRNA-processing protein pro-1 from Caenorhabditis elegans.